We begin with the raw amino-acid sequence, 120 residues long: Large ribosomal subunit protein uL18 (120 aa).

Basic and acidic residues predominate over residues 1–10 (MKLNRVESTR). The disordered stretch occupies residues 1–26 (MKLNRVESTRSRHRRVRRKVGGTGDR). The span at 11-20 (SRHRRVRRKV) shows a compositional bias: basic residues.

This sequence belongs to the universal ribosomal protein uL18 family. As to quaternary structure, part of the 50S ribosomal subunit; part of the 5S rRNA/L5/L18/L25 subcomplex. Contacts the 5S and 23S rRNAs.

Its function is as follows. This is one of the proteins that bind and probably mediate the attachment of the 5S RNA into the large ribosomal subunit, where it forms part of the central protuberance. This chain is Large ribosomal subunit protein uL18, found in Cyanothece sp. (strain PCC 7425 / ATCC 29141).